Here is a 454-residue protein sequence, read N- to C-terminus: Cathepsin C (454 aa).

An N-terminal signal peptide occupies residues 1–20 (MHWVFHCILIILACLRFTCA). Residues 21-217 (DTPANCTYED…SKELISLTGN (197 aa)) constitute a propeptide that is removed on maturation. N-linked (GlcNAc...) asparagine glycosylation occurs at Asn-25. 3 disulfide bridges follow: Cys-26–Cys-107, Cys-244–Cys-287, and Cys-280–Cys-321. Cys-247 is an active-site residue. An N-linked (GlcNAc...) asparagine glycan is attached at Asn-265. A chloride-binding site is contributed by Phe-291. Asn-326 is a glycosylation site (N-linked (GlcNAc...) asparagine). Tyr-337 is a binding site for chloride. Catalysis depends on residues His-398 and Asn-420.

The protein belongs to the peptidase C1 family. Requires chloride as cofactor.

Its subcellular location is the lysosome. In terms of biological role, thiol protease. Has a role as a digestive enzyme. The polypeptide is Cathepsin C (Schistosoma mansoni (Blood fluke)).